We begin with the raw amino-acid sequence, 384 residues long: Succinyl-diaminopimelate desuccinylase (384 aa).

H71 is a binding site for Zn(2+). The active site involves D73. D104 lines the Zn(2+) pocket. Residue E138 is the Proton acceptor of the active site. Zn(2+)-binding residues include E139, E167, and H353.

Belongs to the peptidase M20A family. DapE subfamily. As to quaternary structure, homodimer. Zn(2+) is required as a cofactor. Co(2+) serves as cofactor.

The catalysed reaction is N-succinyl-(2S,6S)-2,6-diaminopimelate + H2O = (2S,6S)-2,6-diaminopimelate + succinate. It participates in amino-acid biosynthesis; L-lysine biosynthesis via DAP pathway; LL-2,6-diaminopimelate from (S)-tetrahydrodipicolinate (succinylase route): step 3/3. Its function is as follows. Catalyzes the hydrolysis of N-succinyl-L,L-diaminopimelic acid (SDAP), forming succinate and LL-2,6-diaminopimelate (DAP), an intermediate involved in the bacterial biosynthesis of lysine and meso-diaminopimelic acid, an essential component of bacterial cell walls. This chain is Succinyl-diaminopimelate desuccinylase, found in Aromatoleum aromaticum (strain DSM 19018 / LMG 30748 / EbN1) (Azoarcus sp. (strain EbN1)).